We begin with the raw amino-acid sequence, 92 residues long: Small ribosomal subunit protein uS19 (92 aa).

This sequence belongs to the universal ribosomal protein uS19 family.

In terms of biological role, protein S19 forms a complex with S13 that binds strongly to the 16S ribosomal RNA. The chain is Small ribosomal subunit protein uS19 from Desulfatibacillum aliphaticivorans.